Consider the following 666-residue polypeptide: DNA mismatch repair protein MutL (666 aa).

This sequence belongs to the DNA mismatch repair MutL/HexB family.

In terms of biological role, this protein is involved in the repair of mismatches in DNA. It is required for dam-dependent methyl-directed DNA mismatch repair. May act as a 'molecular matchmaker', a protein that promotes the formation of a stable complex between two or more DNA-binding proteins in an ATP-dependent manner without itself being part of a final effector complex. The protein is DNA mismatch repair protein MutL of Clostridium botulinum (strain 657 / Type Ba4).